The chain runs to 152 residues: Endoribonuclease YbeY (152 aa).

H118, H122, and H128 together coordinate Zn(2+).

Belongs to the endoribonuclease YbeY family. It depends on Zn(2+) as a cofactor.

The protein resides in the cytoplasm. In terms of biological role, single strand-specific metallo-endoribonuclease involved in late-stage 70S ribosome quality control and in maturation of the 3' terminus of the 16S rRNA. This chain is Endoribonuclease YbeY, found in Lacticaseibacillus casei (strain BL23) (Lactobacillus casei).